A 278-amino-acid polypeptide reads, in one-letter code: 3-methyl-2-oxobutanoate hydroxymethyltransferase (278 aa).

Residues Asp49 and Asp88 each contribute to the Mg(2+) site. 3-methyl-2-oxobutanoate is bound by residues 49 to 50 (DS), Asp88, and Lys118. Glu120 serves as a coordination point for Mg(2+). Catalysis depends on Glu186, which acts as the Proton acceptor.

Belongs to the PanB family. As to quaternary structure, homodecamer; pentamer of dimers. It depends on Mg(2+) as a cofactor.

The protein localises to the cytoplasm. It catalyses the reaction 3-methyl-2-oxobutanoate + (6R)-5,10-methylene-5,6,7,8-tetrahydrofolate + H2O = 2-dehydropantoate + (6S)-5,6,7,8-tetrahydrofolate. The protein operates within cofactor biosynthesis; (R)-pantothenate biosynthesis; (R)-pantoate from 3-methyl-2-oxobutanoate: step 1/2. Functionally, catalyzes the reversible reaction in which hydroxymethyl group from 5,10-methylenetetrahydrofolate is transferred onto alpha-ketoisovalerate to form ketopantoate. In Bordetella parapertussis (strain 12822 / ATCC BAA-587 / NCTC 13253), this protein is 3-methyl-2-oxobutanoate hydroxymethyltransferase.